The sequence spans 215 residues: HTH-type transcriptional repressor FabR (215 aa).

An HTH tetR-type domain is found at 10-70; sequence KTRRSLVEAA…TMVDESGLML (61 aa). The H-T-H motif DNA-binding region spans 33 to 52; it reads SLREVAREAGIAPTSFYRHF.

As to quaternary structure, homodimer.

It localises to the cytoplasm. Its function is as follows. Represses the transcription of fabB, involved in unsaturated fatty acid (UFA) biosynthesis. By controlling UFA production, FabR directly influences the physical properties of the membrane bilayer. The protein is HTH-type transcriptional repressor FabR of Escherichia coli O9:H4 (strain HS).